The chain runs to 1057 residues: MPKNKDINTILVIGSGPIIIGQAAEFDYAGTQACLALKEEGYKVILVNSNPATIMTDKEIADKVYIEPLTHDFIARIIRKEQPDALLPTLGGQTGLNMAIQLHDSGVLESNNVQLLGTKLSSIQQAEDRELFRSLMNELDVPVPESDIVNTVEQAFAFKEQVGYPLIVRPAFTMGGTGGGICHNDEELKEVVTNGLHYSPATQCLIEKSIAGFKEIEYEVMRDKNDNAIVVCNMENIDPVGIHTGDSVVVAPSQTLTDVEYQMLRDVSLKVIRALGIEGGCNVQLALDPHSMNYYIIEVNPRVSRSSALASKATGYPIAKLAAKIAVGLTLDEMLNPVTGTSYAAFEPALDYVISKIPRFPFDKFEKGERVLGTQMKATGEVMAIGRTYEESLLKAIRSLEYGVHHLGLPNGESYDLDYIKERILQQDDERLFFIGEAIRRGTTLEEIHEMTQIDYFFLNKFQHIIDIEHELKDHKGDIEYLKYAKDYGFSDKVIAHRFDMTEDEVNQLRKTNDIKPVYKMVDTCAAEFESSTPYYYGTYERDNESVVTDKEKVIVLGSGPIRIGQGVEFDYATVHAVWAIQNAGYEAIIVNNNPETVSTDFSISDKLYFEPLTVEDVMNIIDLEQPKGVVVQFGGQTAINLAEKLAEKGVQILGTSLENLNRAEDRKEFEALLNKIDVPQPKGKTATSPEEALENAREIGYPVVVRPSYVLGGRAMEIVYNDAELGNYIREAVKASPEHPVLVDRYLTGKEIEVDAICDGDTVIIPGIMEHIERAGVHSGDSIAVYPPQTLSEEDIKTLESYTTKLAKGLDIIGLINIQFVLAHDGVYVLEVNPRSSRTVPFLSKITNIPMAQLAMRAILGEKLSDLGYQPGLQPYTEGVFVKAPVFSFNKLKNVDITLGPEMKSTGEVMGKDLTLEKALFKGLTASGVEVKDHGTVLITVSDKDKDEMVKVAKRLNEVGYKILATEGTAQKLADNHIPVETVGKIGGEDDLLTRIQNGEVQIVINTMTKGKTIERDGFQIRRASVENGVPCLTSLDTANALTNVIESMSFTMKQM.

Positions 1–401 (MPKNKDINTI…SLLKAIRSLE (401 aa)) are carboxyphosphate synthetic domain. Residues R129, R169, G175, G176, K208, I210, E215, G241, I242, H243, Q284, and E298 each coordinate ATP. The ATP-grasp 1 domain maps to 133–327 (RSLMNELDVP…IAKLAAKIAV (195 aa)). The Mg(2+) site is built by Q284, E298, and N300. Mn(2+) is bound by residues Q284, E298, and N300. The interval 402–546 (YGVHHLGLPN…YGTYERDNES (145 aa)) is oligomerization domain. The carbamoyl phosphate synthetic domain stretch occupies residues 547 to 929 (VVTDKEKVIV…ALFKGLTASG (383 aa)). Positions 671 to 861 (EALLNKIDVP…MAQLAMRAIL (191 aa)) constitute an ATP-grasp 2 domain. 10 residues coordinate ATP: R707, R746, L748, E752, G777, V778, H779, S780, Q820, and E832. The Mg(2+) site is built by Q820, E832, and N834. Mn(2+) is bound by residues Q820, E832, and N834. The MGS-like domain maps to 930–1057 (VEVKDHGTVL…ESMSFTMKQM (128 aa)). An allosteric domain region spans residues 930 to 1057 (VEVKDHGTVL…ESMSFTMKQM (128 aa)).

It belongs to the CarB family. As to quaternary structure, composed of two chains; the small (or glutamine) chain promotes the hydrolysis of glutamine to ammonia, which is used by the large (or ammonia) chain to synthesize carbamoyl phosphate. Tetramer of heterodimers (alpha,beta)4. Mg(2+) serves as cofactor. The cofactor is Mn(2+).

The catalysed reaction is hydrogencarbonate + L-glutamine + 2 ATP + H2O = carbamoyl phosphate + L-glutamate + 2 ADP + phosphate + 2 H(+). The enzyme catalyses hydrogencarbonate + NH4(+) + 2 ATP = carbamoyl phosphate + 2 ADP + phosphate + 2 H(+). It participates in amino-acid biosynthesis; L-arginine biosynthesis; carbamoyl phosphate from bicarbonate: step 1/1. Its pathway is pyrimidine metabolism; UMP biosynthesis via de novo pathway; (S)-dihydroorotate from bicarbonate: step 1/3. Functionally, large subunit of the glutamine-dependent carbamoyl phosphate synthetase (CPSase). CPSase catalyzes the formation of carbamoyl phosphate from the ammonia moiety of glutamine, carbonate, and phosphate donated by ATP, constituting the first step of 2 biosynthetic pathways, one leading to arginine and/or urea and the other to pyrimidine nucleotides. The large subunit (synthetase) binds the substrates ammonia (free or transferred from glutamine from the small subunit), hydrogencarbonate and ATP and carries out an ATP-coupled ligase reaction, activating hydrogencarbonate by forming carboxy phosphate which reacts with ammonia to form carbamoyl phosphate. The protein is Carbamoyl phosphate synthase large chain of Staphylococcus carnosus (strain TM300).